A 201-amino-acid polypeptide reads, in one-letter code: Recombination protein RecR (201 aa).

A C4-type zinc finger spans residues Cys60–Cys75. Residues Ser83–Pro178 enclose the Toprim domain.

It belongs to the RecR family.

In terms of biological role, may play a role in DNA repair. It seems to be involved in an RecBC-independent recombinational process of DNA repair. It may act with RecF and RecO. The chain is Recombination protein RecR from Rhizobium rhizogenes (strain K84 / ATCC BAA-868) (Agrobacterium radiobacter).